A 389-amino-acid polypeptide reads, in one-letter code: PqqA peptide cyclase (389 aa).

Residues 20–235 (VGLPLWLLAE…TNEYRARLEA (216 aa)) form the Radical SAM core domain. The [4Fe-4S] cluster site is built by Cys34, Cys38, and Cys41.

This sequence belongs to the radical SAM superfamily. PqqE family. Interacts with PqqD. The interaction is necessary for activity of PqqE. [4Fe-4S] cluster serves as cofactor.

The catalysed reaction is [PQQ precursor protein] + S-adenosyl-L-methionine = E-Y cross-linked-[PQQ precursor protein] + 5'-deoxyadenosine + L-methionine + H(+). It participates in cofactor biosynthesis; pyrroloquinoline quinone biosynthesis. Catalyzes the cross-linking of a glutamate residue and a tyrosine residue in the PqqA protein as part of the biosynthesis of pyrroloquinoline quinone (PQQ). This is PqqA peptide cyclase from Pseudomonas fluorescens (strain ATCC BAA-477 / NRRL B-23932 / Pf-5).